Reading from the N-terminus, the 343-residue chain is Selenide, water dikinase (343 aa).

Cysteine 15 is a catalytic residue. Residues lysine 18 and 46 to 48 each bind ATP; that span reads NKD. Mg(2+) is bound at residue aspartate 49. Residues aspartate 66, aspartate 89, and 137–139 contribute to the ATP site; that span reads GHS. Aspartate 89 is a Mg(2+) binding site. Position 225 (aspartate 225) interacts with Mg(2+).

Belongs to the selenophosphate synthase 1 family. Class I subfamily. In terms of assembly, homodimer. Mg(2+) is required as a cofactor.

The catalysed reaction is hydrogenselenide + ATP + H2O = selenophosphate + AMP + phosphate + 2 H(+). Synthesizes selenophosphate from selenide and ATP. The sequence is that of Selenide, water dikinase from Sulfurovum sp. (strain NBC37-1).